We begin with the raw amino-acid sequence, 547 residues long: Sodium-coupled neutral amino acid transporter 4 (547 aa).

The tract at residues 1–26 (MDPMELRNVNIEPDDESSSGESVPDS) is disordered. The Extracellular portion of the chain corresponds to 1 to 104 (MDPMELRNVN…GLSYAMANTG (104 aa)). Position 49 is a phosphoserine (S49). Residues 105–125 (IILFIIMLLAVAILSLYSVHL) form a helical membrane-spanning segment. Topologically, residues 126-151 (LLKTAKEGGSLIYEKLGEKAFGWPGK) are cytoplasmic. A helical transmembrane segment spans residues 152–172 (IGAFISITMQNIGAMSSYLFI). Residues 173–195 (IKYELPEVIRAFMGLEENTGEWY) lie on the Extracellular side of the membrane. Residues 196-216 (PNGNYLIVFVSLGIILPLSLL) form a helical membrane-spanning segment. Topologically, residues 217–220 (KNLG) are cytoplasmic. Residues 221–241 (YLGYTSGFSLTCMVFFVSVVI) traverse the membrane as a helical segment. Residues 242 to 332 (YKKFQIPCPL…PKYFVFNSRT (91 aa)) are Extracellular-facing. A disulfide bridge links C249 with C321. N260, N264, and N276 each carry an N-linked (GlcNAc...) asparagine glycan. The chain crosses the membrane as a helical span at residues 333-353 (AYAIPILAFAFVCHPEVLPIY). The Cytoplasmic portion of the chain corresponds to 354–369 (SELKDRSRRKMQTVSN). Residues 370–390 (ISITGMLVMYLLAALFGYLTF) traverse the membrane as a helical segment. At 391 to 411 (YGEVEDELLHAYSKVYTFDIP) the chain is on the extracellular side. The helical transmembrane segment at 412–432 (LLMVRLAVLVAVTLTVPIVLF) threads the bilayer. Topologically, residues 433 to 453 (PIRTSVTTLLFPKRPFSWIRH) are cytoplasmic. A helical membrane pass occupies residues 454–474 (FLIAAVLIALNNVLVILVPTI). Residues 475-476 (KY) lie on the Extracellular side of the membrane. The chain crosses the membrane as a helical span at residues 477-497 (IFGFIGASSATMLIFILPAVF). Topologically, residues 498–514 (YLKLVKKESFRSPQKVG) are cytoplasmic. A helical transmembrane segment spans residues 515–535 (ALIFLVVGIIFMIGSMALIII). The Extracellular segment spans residues 536 to 547 (DWIYDPPNSKHH).

The protein belongs to the amino acid/polyamine transporter 2 family. Post-translationally, the disulfide bond plays an important role in substrate transport, but has no effect on trafficking to the cell surface.

It is found in the cell membrane. It localises to the cell projection. Its subcellular location is the microvillus membrane. It catalyses the reaction L-methionine(in) + Na(+)(in) = L-methionine(out) + Na(+)(out). The catalysed reaction is L-asparagine(in) + Na(+)(in) = L-asparagine(out) + Na(+)(out). It carries out the reaction L-threonine(in) + Na(+)(in) = L-threonine(out) + Na(+)(out). The enzyme catalyses L-serine(in) + Na(+)(in) = L-serine(out) + Na(+)(out). It catalyses the reaction glycine(in) + Na(+)(in) = glycine(out) + Na(+)(out). The catalysed reaction is L-alanine(in) + Na(+)(in) = L-alanine(out) + Na(+)(out). It carries out the reaction L-glutamine(in) + Na(+)(in) = L-glutamine(out) + Na(+)(out). The enzyme catalyses L-histidine(in) + Na(+)(in) = L-histidine(out) + Na(+)(out). It catalyses the reaction L-cysteine(in) + Na(+)(in) = L-cysteine(out) + Na(+)(out). The catalysed reaction is L-proline(in) + Na(+)(in) = L-proline(out) + Na(+)(out). Functionally, symporter that cotransports neutral amino acids and sodium ions from the extraccellular to the intracellular side of the cell membrane. The transport is electrogenic, pH dependent and partially tolerates substitution of Na(+) by Li(+). Preferentially transports smaller amino acids, such as glycine, L-alanine, L-serine, L-asparagine and L-threonine, followed by L-cysteine, L-histidine, L-proline and L-glutamine and L-methionine. This is Sodium-coupled neutral amino acid transporter 4 from Pongo abelii (Sumatran orangutan).